A 207-amino-acid chain; its full sequence is Adenylyl-sulfate kinase (207 aa).

39–46 (GLSGAGKS) contributes to the ATP binding site. Catalysis depends on Ser113, which acts as the Phosphoserine intermediate.

It belongs to the APS kinase family.

It carries out the reaction adenosine 5'-phosphosulfate + ATP = 3'-phosphoadenylyl sulfate + ADP + H(+). The protein operates within sulfur metabolism; hydrogen sulfide biosynthesis; sulfite from sulfate: step 2/3. In terms of biological role, catalyzes the synthesis of activated sulfate. The chain is Adenylyl-sulfate kinase from Vibrio vulnificus (strain CMCP6).